Here is an 887-residue protein sequence, read N- to C-terminus: Valine--tRNA ligase (887 aa).

Residues 48–58 (PNVTGVLHVGH) carry the 'HIGH' region motif. Positions 527–531 (KMSKS) match the 'KMSKS' region motif. Lys530 lines the ATP pocket. Residues 814 to 887 (LAGLVDIEAE…EASDRLKKLS (74 aa)) adopt a coiled-coil conformation.

The protein belongs to the class-I aminoacyl-tRNA synthetase family. ValS type 1 subfamily. Monomer.

It localises to the cytoplasm. The enzyme catalyses tRNA(Val) + L-valine + ATP = L-valyl-tRNA(Val) + AMP + diphosphate. Functionally, catalyzes the attachment of valine to tRNA(Val). As ValRS can inadvertently accommodate and process structurally similar amino acids such as threonine, to avoid such errors, it has a 'posttransfer' editing activity that hydrolyzes mischarged Thr-tRNA(Val) in a tRNA-dependent manner. The protein is Valine--tRNA ligase of Desulfotalea psychrophila (strain LSv54 / DSM 12343).